A 164-amino-acid polypeptide reads, in one-letter code: Phosphopantetheine adenylyltransferase (164 aa).

Ser9 is a substrate binding site. Residues 9 to 10 (SF) and His17 contribute to the ATP site. The substrate site is built by Lys41, Leu73, and Lys87. ATP-binding positions include 88 to 90 (GLR), Glu98, and 123 to 129 (YSYLSSS).

This sequence belongs to the bacterial CoaD family. Homohexamer. Mg(2+) is required as a cofactor.

The protein resides in the cytoplasm. It carries out the reaction (R)-4'-phosphopantetheine + ATP + H(+) = 3'-dephospho-CoA + diphosphate. It participates in cofactor biosynthesis; coenzyme A biosynthesis; CoA from (R)-pantothenate: step 4/5. Reversibly transfers an adenylyl group from ATP to 4'-phosphopantetheine, yielding dephospho-CoA (dPCoA) and pyrophosphate. The sequence is that of Phosphopantetheine adenylyltransferase from Clostridium botulinum (strain ATCC 19397 / Type A).